The sequence spans 611 residues: tRNA uridine 5-carboxymethylaminomethyl modification enzyme MnmG (611 aa).

14–19 is an FAD binding site; that stretch reads GAGHAG. 274–288 serves as a coordination point for NAD(+); sequence GPRYCPSIEDKIVKF.

The protein belongs to the MnmG family. Homodimer. Heterotetramer of two MnmE and two MnmG subunits. It depends on FAD as a cofactor.

Its subcellular location is the cytoplasm. Functionally, NAD-binding protein involved in the addition of a carboxymethylaminomethyl (cmnm) group at the wobble position (U34) of certain tRNAs, forming tRNA-cmnm(5)s(2)U34. This is tRNA uridine 5-carboxymethylaminomethyl modification enzyme MnmG from Chlamydia caviae (strain ATCC VR-813 / DSM 19441 / 03DC25 / GPIC) (Chlamydophila caviae).